The primary structure comprises 500 residues: DNA double-strand break repair helicase HerA (500 aa).

ATP is bound by residues R142, 151–156 (GSGKSN), and 459–460 (KI).

The protein belongs to the HerA family. As to quaternary structure, homohexamer. Forms a complex with NurA.

It catalyses the reaction Couples ATP hydrolysis with the unwinding of duplex DNA at the replication fork by translocating in the 5'-3' direction. This creates two antiparallel DNA single strands (ssDNA). The leading ssDNA polymer is the template for DNA polymerase III holoenzyme which synthesizes a continuous strand.. The catalysed reaction is ATP + H2O = ADP + phosphate + H(+). It carries out the reaction Couples ATP hydrolysis with the unwinding of duplex DNA by translocating in the 3'-5' direction.. With respect to regulation, ATPase activity is stimulated in the presence of linear double-stranded (ds)DNA. Helicase activity requires the presence of NurA. LhrC-Core (Hel112) inhibits the exonuclease activity of the HerA-NurA complex on ss- and dsDNA, has no effect on the nicking activity of NurA. Functionally, involved in DNA double-strand break (DSB) repair. Probably acts with NurA to stimulate resection of the 5' strand and produce the long 3' single-strand that is required for RadA loading. NurA and HerA together stimulate the end-resection of six nucleotides of a linear DNA substrate. Has DNA-dependent ATPase activity and bidirectional DNA helicase activity. Preferentially binds single stranded (ss)DNA, bubble and semiforked DNA substrate over other DNA molecules tested. Stimulates the exo- but not endonuclease activity of NurA. The polypeptide is DNA double-strand break repair helicase HerA (Saccharolobus solfataricus (strain ATCC 35092 / DSM 1617 / JCM 11322 / P2) (Sulfolobus solfataricus)).